Consider the following 166-residue polypeptide: Putative peroxiredoxin (166 aa).

The Thioredoxin domain maps to 1 to 166 (EIGSTIPNAT…SSAATVLSKL (166 aa)). The active-site Cysteine sulfenic acid (-SOH) intermediate is Cys56. The Microbody targeting signal signature appears at 164–166 (SKL).

It belongs to the peroxiredoxin family. Prx5 subfamily. As to quaternary structure, homodimer; disulfide-linked, upon oxidation.

It carries out the reaction a hydroperoxide + [thioredoxin]-dithiol = an alcohol + [thioredoxin]-disulfide + H2O. Its function is as follows. Thiol-specific peroxidase that catalyzes the reduction of hydrogen peroxide and organic hydroperoxides to water and alcohols, respectively. Plays a role in cell protection against oxidative stress by detoxifying peroxides and as sensor of hydrogen peroxide-mediated signaling events. The sequence is that of Putative peroxiredoxin from Malassezia furfur (Pityriasis versicolor infection agent).